The following is a 430-amino-acid chain: Serine hydroxymethyltransferase (430 aa).

120 to 122 (GHI) contributes to the (6S)-5,6,7,8-tetrahydrofolate binding site. Residue Lys226 is modified to N6-(pyridoxal phosphate)lysine.

Belongs to the SHMT family. Homodimer. Pyridoxal 5'-phosphate is required as a cofactor.

Its subcellular location is the cytoplasm. The protein operates within amino-acid biosynthesis; glycine biosynthesis; glycine from L-serine: step 1/1. Its function is as follows. Catalyzes the reversible interconversion of serine and glycine with a modified folate serving as the one-carbon carrier. Also exhibits a pteridine-independent aldolase activity toward beta-hydroxyamino acids, producing glycine and aldehydes, via a retro-aldol mechanism. The polypeptide is Serine hydroxymethyltransferase (Pyrobaculum aerophilum (strain ATCC 51768 / DSM 7523 / JCM 9630 / CIP 104966 / NBRC 100827 / IM2)).